A 221-amino-acid polypeptide reads, in one-letter code: Thiamine-phosphate synthase (221 aa).

Residues Q46–K50 and N83 contribute to the 4-amino-2-methyl-5-(diphosphooxymethyl)pyrimidine site. D84 and D103 together coordinate Mg(2+). S122 lines the 4-amino-2-methyl-5-(diphosphooxymethyl)pyrimidine pocket. T149–S151 lines the 2-[(2R,5Z)-2-carboxy-4-methylthiazol-5(2H)-ylidene]ethyl phosphate pocket. K152 contacts 4-amino-2-methyl-5-(diphosphooxymethyl)pyrimidine. 2-[(2R,5Z)-2-carboxy-4-methylthiazol-5(2H)-ylidene]ethyl phosphate contacts are provided by residues G181 and I201 to S202.

Belongs to the thiamine-phosphate synthase family. It depends on Mg(2+) as a cofactor.

The catalysed reaction is 2-[(2R,5Z)-2-carboxy-4-methylthiazol-5(2H)-ylidene]ethyl phosphate + 4-amino-2-methyl-5-(diphosphooxymethyl)pyrimidine + 2 H(+) = thiamine phosphate + CO2 + diphosphate. It catalyses the reaction 2-(2-carboxy-4-methylthiazol-5-yl)ethyl phosphate + 4-amino-2-methyl-5-(diphosphooxymethyl)pyrimidine + 2 H(+) = thiamine phosphate + CO2 + diphosphate. It carries out the reaction 4-methyl-5-(2-phosphooxyethyl)-thiazole + 4-amino-2-methyl-5-(diphosphooxymethyl)pyrimidine + H(+) = thiamine phosphate + diphosphate. Its pathway is cofactor biosynthesis; thiamine diphosphate biosynthesis; thiamine phosphate from 4-amino-2-methyl-5-diphosphomethylpyrimidine and 4-methyl-5-(2-phosphoethyl)-thiazole: step 1/1. In terms of biological role, condenses 4-methyl-5-(beta-hydroxyethyl)thiazole monophosphate (THZ-P) and 2-methyl-4-amino-5-hydroxymethyl pyrimidine pyrophosphate (HMP-PP) to form thiamine monophosphate (TMP). This Actinobacillus succinogenes (strain ATCC 55618 / DSM 22257 / CCUG 43843 / 130Z) protein is Thiamine-phosphate synthase.